The primary structure comprises 507 residues: Putative thymidine phosphorylase (507 aa).

The protein belongs to the thymidine/pyrimidine-nucleoside phosphorylase family. Type 2 subfamily.

The enzyme catalyses thymidine + phosphate = 2-deoxy-alpha-D-ribose 1-phosphate + thymine. The polypeptide is Putative thymidine phosphorylase (Ralstonia nicotianae (strain ATCC BAA-1114 / GMI1000) (Ralstonia solanacearum)).